Here is a 477-residue protein sequence, read N- to C-terminus: Protein kinase C and casein kinase substrate in neurons protein 2 (477 aa).

Residues valine 11 to aspartate 282 enclose the F-BAR domain. Positions lysine 25–isoleucine 274 form a coiled coil. 2 stretches are compositionally biased toward basic and acidic residues: residues cysteine 163 to serine 176 and glutamine 186 to aspartate 216. 2 disordered regions span residues cysteine 163 to threonine 218 and arginine 314 to glutamate 412. Positions glycine 328–glutamine 341 are enriched in low complexity. Over residues histidine 342 to proline 357 the composition is skewed to polar residues. Positions asparagine 356–phenylalanine 358 match the NPF1 motif. Over residues threonine 370–glutamate 388 the composition is skewed to basic and acidic residues. The span at asparagine 395–asparagine 407 shows a compositional bias: polar residues. The short motif at asparagine 396–phenylalanine 398 is the NPF2 element. Positions asparagine 408–phenylalanine 410 match the NPF3 motif. The region spanning threonine 417 to glutamine 477 is the SH3 domain.

Belongs to the PACSIN family. Interacts with adam13 through the SH3 domains. In terms of processing, phosphorylated. Ubiquitously expressed with higher expression in the ectoderm, the neuroectoderm, and dorsal mesoderm layers.

Its subcellular location is the cytoplasm. The protein localises to the cytoskeleton. The protein resides in the cytoplasmic vesicle membrane. It localises to the cell projection. It is found in the ruffle membrane. Its subcellular location is the early endosome. The protein localises to the recycling endosome membrane. The protein resides in the cell membrane. It localises to the membrane. It is found in the caveola. Its subcellular location is the cell junction. The protein localises to the adherens junction. Functionally, regulates the morphogenesis and endocytosis of caveolae. Lipid-binding protein that is able to promote the tubulation of the phosphatidic acid-containing membranes it preferentially binds. Plays a role in intracellular vesicle-mediated transport. Involved in the endocytosis of cell-surface receptors like the EGF receptor, contributing to its internalization in the absence of EGF stimulus. This Xenopus laevis (African clawed frog) protein is Protein kinase C and casein kinase substrate in neurons protein 2 (pacsin2).